A 431-amino-acid polypeptide reads, in one-letter code: Glutamate--tRNA ligase 1 (431 aa).

Residues 6 to 16 (PSPTGDMHIGN) carry the 'HIGH' region motif. The 'KMSKS' region motif lies at 235 to 239 (KMSKR). Lys238 serves as a coordination point for ATP.

It belongs to the class-I aminoacyl-tRNA synthetase family. Glutamate--tRNA ligase type 1 subfamily. As to quaternary structure, monomer.

Its subcellular location is the cytoplasm. It carries out the reaction tRNA(Glu) + L-glutamate + ATP = L-glutamyl-tRNA(Glu) + AMP + diphosphate. Catalyzes the attachment of glutamate to tRNA(Glu) in a two-step reaction: glutamate is first activated by ATP to form Glu-AMP and then transferred to the acceptor end of tRNA(Glu). In Campylobacter jejuni subsp. jejuni serotype O:23/36 (strain 81-176), this protein is Glutamate--tRNA ligase 1.